The primary structure comprises 188 residues: ATP synthase subunit delta (188 aa).

Belongs to the ATPase delta chain family. F-type ATPases have 2 components, F(1) - the catalytic core - and F(0) - the membrane proton channel. F(1) has five subunits: alpha(3), beta(3), gamma(1), delta(1), epsilon(1). F(0) has three main subunits: a(1), b(2) and c(10-14). The alpha and beta chains form an alternating ring which encloses part of the gamma chain. F(1) is attached to F(0) by a central stalk formed by the gamma and epsilon chains, while a peripheral stalk is formed by the delta and b chains.

The protein localises to the cell inner membrane. Functionally, f(1)F(0) ATP synthase produces ATP from ADP in the presence of a proton or sodium gradient. F-type ATPases consist of two structural domains, F(1) containing the extramembraneous catalytic core and F(0) containing the membrane proton channel, linked together by a central stalk and a peripheral stalk. During catalysis, ATP synthesis in the catalytic domain of F(1) is coupled via a rotary mechanism of the central stalk subunits to proton translocation. In terms of biological role, this protein is part of the stalk that links CF(0) to CF(1). It either transmits conformational changes from CF(0) to CF(1) or is implicated in proton conduction. The protein is ATP synthase subunit delta of Rhizobium meliloti (strain 1021) (Ensifer meliloti).